The primary structure comprises 113 residues: Ribonuclease P protein component (113 aa).

This sequence belongs to the RnpA family. In terms of assembly, consists of a catalytic RNA component (M1 or rnpB) and a protein subunit.

It carries out the reaction Endonucleolytic cleavage of RNA, removing 5'-extranucleotides from tRNA precursor.. RNaseP catalyzes the removal of the 5'-leader sequence from pre-tRNA to produce the mature 5'-terminus. It can also cleave other RNA substrates such as 4.5S RNA. The protein component plays an auxiliary but essential role in vivo by binding to the 5'-leader sequence and broadening the substrate specificity of the ribozyme. The sequence is that of Ribonuclease P protein component from Geotalea uraniireducens (strain Rf4) (Geobacter uraniireducens).